The primary structure comprises 211 residues: Ribosomal RNA small subunit methyltransferase G (211 aa).

S-adenosyl-L-methionine contacts are provided by residues glycine 73, 125-126 (IE), and arginine 141.

It belongs to the methyltransferase superfamily. RNA methyltransferase RsmG family.

It localises to the cytoplasm. The enzyme catalyses guanosine(527) in 16S rRNA + S-adenosyl-L-methionine = N(7)-methylguanosine(527) in 16S rRNA + S-adenosyl-L-homocysteine. Functionally, specifically methylates the N7 position of guanine in position 527 of 16S rRNA. The polypeptide is Ribosomal RNA small subunit methyltransferase G (Methylobacterium radiotolerans (strain ATCC 27329 / DSM 1819 / JCM 2831 / NBRC 15690 / NCIMB 10815 / 0-1)).